We begin with the raw amino-acid sequence, 1203 residues long: DNA-directed RNA polymerase subunit beta (1203 aa).

Residues 1167–1203 (LSKYAQQQEEQRKAAAQTDESKTAPATKNESQPNTQD) are disordered. Polar residues predominate over residues 1190–1203 (APATKNESQPNTQD).

The protein belongs to the RNA polymerase beta chain family. The RNAP catalytic core consists of 2 alpha, 1 beta, 1 beta' and 1 omega subunit. When a sigma factor is associated with the core the holoenzyme is formed, which can initiate transcription.

The catalysed reaction is RNA(n) + a ribonucleoside 5'-triphosphate = RNA(n+1) + diphosphate. Functionally, DNA-dependent RNA polymerase catalyzes the transcription of DNA into RNA using the four ribonucleoside triphosphates as substrates. The polypeptide is DNA-directed RNA polymerase subunit beta (Levilactobacillus brevis (strain ATCC 367 / BCRC 12310 / CIP 105137 / JCM 1170 / LMG 11437 / NCIMB 947 / NCTC 947) (Lactobacillus brevis)).